The chain runs to 349 residues: Phosphoribosylformylglycinamidine cyclo-ligase (349 aa).

This sequence belongs to the AIR synthase family.

The protein resides in the cytoplasm. The enzyme catalyses 2-formamido-N(1)-(5-O-phospho-beta-D-ribosyl)acetamidine + ATP = 5-amino-1-(5-phospho-beta-D-ribosyl)imidazole + ADP + phosphate + H(+). The protein operates within purine metabolism; IMP biosynthesis via de novo pathway; 5-amino-1-(5-phospho-D-ribosyl)imidazole from N(2)-formyl-N(1)-(5-phospho-D-ribosyl)glycinamide: step 2/2. In Listeria monocytogenes serotype 4a (strain HCC23), this protein is Phosphoribosylformylglycinamidine cyclo-ligase.